The sequence spans 3573 residues: Zinc finger homeobox protein 4 (3573 aa).

Over residues 1 to 28 (METCDSPTISRQENGQSTSKLCGTTQLD) the composition is skewed to polar residues. 3 disordered regions span residues 1–54 (METC…LRTD), 425–479 (LSHS…DTYS), and 522–606 (TSSS…GSPG). 2 stretches are compositionally biased toward basic and acidic residues: residues 39–54 (EPDR…LRTD) and 434–452 (KLSE…KETN). Over residues 468–479 (EPVEEEDEDTYS) the composition is skewed to acidic residues. A compositionally biased stretch (polar residues) spans 585–599 (SVTPHQHSFTPSTPS). 3 consecutive C2H2-type zinc fingers follow at residues 609 to 632 (IECP…TMMH), 640 to 663 (LKCP…KEKH), and 695 to 719 (FRCE…SDKH). Residues 763 to 785 (WRCEVCDYETNVARNLRIHMTSE) form a C2H2-type 4; degenerate zinc finger. 3 C2H2-type zinc fingers span residues 913–937 (YQCK…TDKH), 969–991 (LKCN…TTNH), and 1017–1041 (YYCA…SVKH). The interval 1096-1132 (GEDTEGSAKSTSVAIGDDKDSSERDNTEAKKSSKDSV) is disordered. Residues 1111–1129 (GDDKDSSERDNTEAKKSSK) show a composition bias toward basic and acidic residues. 2 consecutive C2H2-type zinc fingers follow at residues 1168 to 1191 (YQCP…LSQH) and 1197 to 1220 (ICCP…THLH). Positions 1250–1340 (AASEKSERDT…EQQKKQQLSV (91 aa)) are disordered. The span at 1277-1306 (VDEKSTPGTDESKPGMEIKSEEQKPPKESA) shows a compositional bias: basic and acidic residues. A compositionally biased stretch (polar residues) spans 1322 to 1340 (TDSMPDQLNEQQKKQQLSV). 2 C2H2-type zinc fingers span residues 1348-1370 (YRCN…SQYH) and 1376-1399 (TMCS…EAGH). A disordered region spans residues 1442–1476 (YEMEQEGKASPVGSDSSSIPDDMGSEPKRTLPFRK). 2 C2H2-type zinc fingers span residues 1492–1518 (YKCT…SHLH) and 1544–1568 (YKCS…SVLH). Disordered stretches follow at residues 1577–1596 (LEPS…VNSP) and 1795–1843 (YKES…IASG). Low complexity predominate over residues 1580 to 1596 (SGNISSGNSVAGNVNSP). Residues 1795–1830 (YKESEEISEKQEKPKQEFTNESEGLKENKDMKKPKS) are compositionally biased toward basic and acidic residues. The C2H2-type 14 zinc-finger motif lies at 1886 to 1909 (LECGTCSKLFSNILILKSHQEHVH). A disordered region spans residues 1933–2013 (YPISPSSPET…PSAPPQVQLP (81 aa)). Pro residues-rich tracts occupy residues 1940–1962 (PETP…PTPS) and 1980–2007 (LQAP…PSAP). 2 consecutive DNA-binding regions (homeobox) follow at residues 2072–2131 (FKRP…RQRN) and 2169–2228 (KRSS…RKSY). The C2H2-type 15; degenerate zinc finger occupies 2255 to 2279 (YQCKKCSVVFPRIFDLITHQKKQCY). Disordered stretches follow at residues 2278-2300 (CYKD…DASD) and 2318-2426 (SLAV…TPLQ). The segment covering 2281–2297 (DEDDDAQDESQTEDSMD) has biased composition (acidic residues). Residues 2318–2334 (SLAVTAASSGSGSSTPL) are compositionally biased toward low complexity. Over residues 2340-2357 (PEPEKASPKSESTEKPKP) the composition is skewed to basic and acidic residues. 2 stretches are compositionally biased toward low complexity: residues 2360-2373 (TISK…QSSK) and 2382-2413 (PSDP…TTPV). Residues 2436–2458 (YQCDQCTVAFPTLELWQEHQHMH) form a C2H2-type 16 zinc finger. A compositionally biased stretch (polar residues) spans 2499–2509 (LAQMPPQTGSS). The tract at residues 2499–2553 (LAQMPPQTGSSHAAHPATVSGSMKRKLDDKEDNNCSEKEGGNSGEDQHRDKRLRT) is disordered. The span at 2523–2547 (RKLDDKEDNNCSEKEGGNSGEDQHR) shows a compositional bias: basic and acidic residues. A DNA-binding region (homeobox 3) is located at residues 2548–2607 (DKRLRTTITPEQLEILYEKYLLDSNPTRKMLDHIAREVGLKKRVVQVWFQNTRARERKGQ). The C2H2-type 17 zinc-finger motif lies at 2618–2641 (KRCPFCRALFKAKSALESHIRSRH). Disordered stretches follow at residues 2704-2788 (EMSP…PKPL) and 2820-2875 (FSEK…PGHK). 2 stretches are compositionally biased toward polar residues: residues 2709-2718 (NLLSPSSFKA) and 2746-2773 (TSSI…TGSS). Basic and acidic residues predominate over residues 2820–2829 (FSEKDGDHDQ). Residues 2874–2933 (HKRFRTQMSNLQLKVLKACFSDYRTPTMQECEMLGNEIGLPKRVVQVWFQNARAKEKKFK) constitute a DNA-binding region (homeobox 4). A C2H2-type 18; degenerate zinc finger spans residues 2952-2976 (PECSLCGVKYSARLSIRDHIFSKQH). Disordered stretches follow at residues 3060–3174 (PSSL…KHLK) and 3287–3343 (LQKQ…LDSK). Residues 3084-3104 (PTSATSSPALSLSSAPSKPLL) show a composition bias toward low complexity. Positions 3105 to 3129 (QTPPPPPPPPPPPPPPPPPPPPPPS) are enriched in pro residues. Basic and acidic residues predominate over residues 3159–3174 (IKEEELEANKPEKHLK). Residues 3271-3316 (ALLQQYQQYQQNLQDSLQKQQKQQQEQQQKQVQAKSSKAENDQQQN) adopt a coiled-coil conformation. Residues 3287–3305 (LQKQQKQQQEQQQKQVQAK) are compositionally biased toward low complexity. Over residues 3321–3343 (SETKEDRSSATESTKEEPQLDSK) the composition is skewed to basic and acidic residues. The C2H2-type 19; degenerate zinc finger occupies 3360–3384 (FICRKCQMMFTDEDAAVNHQKSFCY). A C2H2-type 20 zinc finger spans residues 3404–3428 (YQCLACDVAISGNEALSQHLQSSLH). 2 disordered regions span residues 3449 to 3468 (HSVC…AASS) and 3518 to 3543 (TSGV…QKLE). Residues 3453-3468 (SPNPNTTSTSQSAASS) are compositionally biased toward low complexity.

Belongs to the krueppel C2H2-type zinc-finger protein family.

Its subcellular location is the nucleus. Functionally, may play a role in neural and muscle differentiation. May be involved in transcriptional regulation. This is Zinc finger homeobox protein 4 (ZFHX4) from Gallus gallus (Chicken).